A 447-amino-acid chain; its full sequence is Diaminopimelate decarboxylase (447 aa).

K72 is subject to N6-(pyridoxal phosphate)lysine. Residues G258 and 300–303 each bind pyridoxal 5'-phosphate; that span reads EPGR. Residues R303, R344, and Y348 each contribute to the substrate site. C375 (proton donor) is an active-site residue. Positions 376 and 405 each coordinate substrate. Y405 is a binding site for pyridoxal 5'-phosphate.

Belongs to the Orn/Lys/Arg decarboxylase class-II family. LysA subfamily. In terms of assembly, homodimer. Requires pyridoxal 5'-phosphate as cofactor.

It catalyses the reaction meso-2,6-diaminopimelate + H(+) = L-lysine + CO2. The protein operates within amino-acid biosynthesis; L-lysine biosynthesis via DAP pathway; L-lysine from DL-2,6-diaminopimelate: step 1/1. Specifically catalyzes the decarboxylation of meso-diaminopimelate (meso-DAP) to L-lysine. This chain is Diaminopimelate decarboxylase, found in Mycobacterium bovis (strain ATCC BAA-935 / AF2122/97).